The primary structure comprises 451 residues: UDP-glycosyltransferase 76C4 (451 aa).

UDP-alpha-D-glucose-binding positions include Ser-273, 332-334 (APQ), 349-357 (HNGWNSTVE), and 371-374 (RWDQ).

This sequence belongs to the UDP-glycosyltransferase family.

The protein is UDP-glycosyltransferase 76C4 (UGT76C4) of Arabidopsis thaliana (Mouse-ear cress).